A 758-amino-acid polypeptide reads, in one-letter code: Calcium up-regulated protein E (758 aa).

The tract at residues 1–22 (MINIEDISKSSNQSEEKQLKST) is disordered. 2 consecutive Ricin B-type lectin domains span residues 25–145 (KPKY…WTTF) and 156–288 (GYFQ…WIAN).

It belongs to the cup family.

The protein localises to the cytoplasm. It is found in the membrane. May play an important role in stabilizing and/or regulating the cell membrane during Ca(2+) stress or certain stages of development. The protein is Calcium up-regulated protein E (cupE) of Dictyostelium discoideum (Social amoeba).